The sequence spans 770 residues: Transducin-like enhancer protein 1 (770 aa).

Residues 1 to 131 (MFPQSRHPTP…IIGQQQLQAQ (131 aa)) are q domain. Disordered regions lie at residues 128 to 157 (LQAQ…GIPP) and 176 to 346 (HLAI…PAME). A GP domain region spans residues 132–199 (HLSHGHGPPV…RHRDRESGTS (68 aa)). Residues 146 to 157 (HPSGLQPPGIPP) show a composition bias toward low complexity. Composition is skewed to basic and acidic residues over residues 178 to 196 (AIKD…DRES) and 209 to 244 (RSTD…KSDD). A ccN domain region spans residues 200-266 (NSLLVPDSLR…SPHASPTHSP (67 aa)). The Nuclear localization signal signature appears at 225 to 228 (KKRK). S237 is subject to Phosphoserine; by CK2. Over residues 255 to 264 (PSSPHASPTH) the composition is skewed to low complexity. Phosphoserine; by CDK1 is present on residues S257, S261, and S265. The segment covering 265-281 (SPRENGIDKNRLLKKDA) has biased composition (basic and acidic residues). The tract at residues 267–450 (RENGIDKNRL…GGKPAYSFHV (184 aa)) is SP domain. Low complexity predominate over residues 282-297 (SGSPASTASSGSSSSL). A Phosphoserine modification is found at S284. Residues 298 to 308 (KSKEVSLHEKA) are compositionally biased toward basic and acidic residues. 6 WD repeats span residues 470–501 (GIPR…HVYT), 528–558 (NRDN…SIWD), 572–602 (SSAP…AVWD), 614–644 (GHTD…RSWD), 696–726 (LHES…NAWR), and 737–767 (KESS…TVYE).

The protein belongs to the WD repeat Groucho/TLE family. Homooligomer and heterooligomer with other family members. Binds RUNX1, RUNX3, FOXA2, KDM6A, UTY, histone H3, HESX1, ESRRG and the NF-kappa-B subunit RELA. Interacts with HES1 (via WRPW motif). Binds TCF7, LEF1, TCF7L1 and TCF7L2. Interacts with SIX3. Interacts with EFNB1. Interacts with TLE4. Interacts with FOXG1/BF-1; the interaction is inhibited by TLE6/GRG6. Phosphorylated, probably by CDK1. The degree of phosphorylation varies throughout the cell cycle, and is highest at the G2/M transition. Becomes hyperphosphorylated in response to cell differentiation and interaction with HES1 or RUNX1. In terms of processing, ubiquitinated by XIAP/BIRC4. Highly expressed in liver and lung. Detected at slightly lower levels in heart, brain, kidney and testis. Detected in fetal and adult stomach and small intestine, in adult ileum, duodenum and colon. Expressed in bone marrow-derived macrophages. In terms of tissue distribution, most abundant at the base of the crypts of Lieberkuhn in the small intestine.

The protein resides in the nucleus. The protein localises to the cytoplasm. In terms of biological role, transcriptional corepressor that binds to a number of transcription factors. Inhibits NF-kappa-B-regulated gene expression. Inhibits the transcriptional activation mediated by FOXA2, and by CTNNB1 and TCF family members in Wnt signaling. Enhances FOXG1/BF-1- and HES1-mediated transcriptional repression. The effects of full-length TLE family members may be modulated by association with dominant-negative AES. Unusual function as coactivator for ESRRG. This Mus musculus (Mouse) protein is Transducin-like enhancer protein 1 (Tle1).